The sequence spans 870 residues: MOG interacting and ectopic P-granules protein 1 (870 aa).

The disordered stretch occupies residues 1-244 (MVTADETVLA…VPEEDNNEQA (244 aa)). The segment covering 9 to 20 (LATTTNTTSMSV) has biased composition (polar residues). Residues 41-51 (EQLKAEQREVM) show a composition bias toward basic and acidic residues. Acidic residues-rich tracts occupy residues 77 to 99 (EVIE…DENG), 129 to 142 (IEQD…EITE), and 203 to 214 (IELDDDDDDEIQ). C2H2-type zinc fingers lie at residues 421 to 444 (HRCD…ENLH) and 450 to 473 (FQCT…FETH). The segment at 486–508 (YPCAICEEDFNFKGVREQHYKQC) adopts a CCHC-type zinc-finger fold. Composition is skewed to polar residues over residues 673 to 688 (LQAA…SQKT) and 695 to 708 (KLVT…VGSS). The disordered stretch occupies residues 673–708 (LQAAVNSMRSQNSQKTPTHRSSKLVTTPSHATVGSS). 4 C2H2-type zinc fingers span residues 713 to 736 (FVCE…QTTH), 753 to 776 (LACS…VMSH), 794 to 815 (GRCK…VADH), and 826 to 849 (YSCD…TSNH). Positions 847–870 (SNHPKGDKKTSTPAKKDDCITLDD) are disordered. A compositionally biased stretch (basic and acidic residues) spans 850–870 (PKGDKKTSTPAKKDDCITLDD).

In terms of assembly, interacts with hda-1, let-418, lin-1, mog-1, mog-4, mog-5, mog-6, pie-1 and unc-98. Post-translationally, sumoylated. In terms of tissue distribution, expressed in somatic cells of embryos, the head, hypodermis and tail of larvae and the germline of adults, including oocytes but not mature sperm and spermatocytes.

The protein resides in the nucleus. In terms of biological role, has a broad role in development, specifically in the genetic pathway SynMuvB that negatively regulates specification of the vulval cell fate. Required for fem-3 3'-UTR-mediated repression in the regulation of the sperm/oocyte switch. Acts by regulating the translation of fem-3 mRNA, by binding to its 3'-UTR. The chain is MOG interacting and ectopic P-granules protein 1 from Caenorhabditis elegans.